A 609-amino-acid chain; its full sequence is UvrABC system protein C (609 aa).

One can recognise a GIY-YIG domain in the interval 16-94; sequence SSAGVYRMYD…IKQYMPKYNV (79 aa). Positions 203–238 constitute a UVR domain; sequence KQVISELVAKMEEAAEQQAYEQAARFRDQIMALRRV.

This sequence belongs to the UvrC family. As to quaternary structure, interacts with UvrB in an incision complex.

The protein resides in the cytoplasm. The UvrABC repair system catalyzes the recognition and processing of DNA lesions. UvrC both incises the 5' and 3' sides of the lesion. The N-terminal half is responsible for the 3' incision and the C-terminal half is responsible for the 5' incision. The polypeptide is UvrABC system protein C (Shewanella sp. (strain MR-4)).